Here is a 180-residue protein sequence, read N- to C-terminus: ATP synthase subunit delta (180 aa).

This sequence belongs to the ATPase delta chain family. F-type ATPases have 2 components, F(1) - the catalytic core - and F(0) - the membrane proton channel. F(1) has five subunits: alpha(3), beta(3), gamma(1), delta(1), epsilon(1). F(0) has three main subunits: a(1), b(2) and c(10-14). The alpha and beta chains form an alternating ring which encloses part of the gamma chain. F(1) is attached to F(0) by a central stalk formed by the gamma and epsilon chains, while a peripheral stalk is formed by the delta and b chains.

Its subcellular location is the cell membrane. Its function is as follows. F(1)F(0) ATP synthase produces ATP from ADP in the presence of a proton or sodium gradient. F-type ATPases consist of two structural domains, F(1) containing the extramembraneous catalytic core and F(0) containing the membrane proton channel, linked together by a central stalk and a peripheral stalk. During catalysis, ATP synthesis in the catalytic domain of F(1) is coupled via a rotary mechanism of the central stalk subunits to proton translocation. This protein is part of the stalk that links CF(0) to CF(1). It either transmits conformational changes from CF(0) to CF(1) or is implicated in proton conduction. The sequence is that of ATP synthase subunit delta from Mycoplasma mobile (strain ATCC 43663 / 163K / NCTC 11711) (Mesomycoplasma mobile).